Reading from the N-terminus, the 369-residue chain is Aminomethyltransferase (369 aa).

This sequence belongs to the GcvT family. In terms of assembly, the glycine cleavage system is composed of four proteins: P, T, L and H.

It carries out the reaction N(6)-[(R)-S(8)-aminomethyldihydrolipoyl]-L-lysyl-[protein] + (6S)-5,6,7,8-tetrahydrofolate = N(6)-[(R)-dihydrolipoyl]-L-lysyl-[protein] + (6R)-5,10-methylene-5,6,7,8-tetrahydrofolate + NH4(+). The glycine cleavage system catalyzes the degradation of glycine. The chain is Aminomethyltransferase from Xanthomonas oryzae pv. oryzae (strain PXO99A).